The sequence spans 289 residues: Nucleotide-binding protein Francci3_1634 (289 aa).

13–20 (GLSGAGRS) contacts ATP. 64-67 (DVRG) contributes to the GTP binding site.

Belongs to the RapZ-like family.

In terms of biological role, displays ATPase and GTPase activities. This Frankia casuarinae (strain DSM 45818 / CECT 9043 / HFP020203 / CcI3) protein is Nucleotide-binding protein Francci3_1634.